The sequence spans 1607 residues: Abnormal cell migration protein 38 (1607 aa).

Disordered regions lie at residues 14–52 (EFNK…SQDF), 67–93 (RLSP…QYHV), 167–222 (STSY…AAQA), 326–425 (GSSA…PPSQ), 459–478 (SPNT…GMDQ), 549–594 (MVHR…QHSY), 845–931 (YDEN…PETE), 1017–1061 (SVQV…DYDM), 1141–1241 (EPSP…VTPK), 1319–1378 (ETPN…KGQL), 1392–1445 (FANV…PQAV), and 1517–1607 (KVKT…STDP). Composition is skewed to polar residues over residues 81–93 (PGPS…QYHV) and 179–191 (PSGN…NHQQ). The segment covering 195–205 (VPQVQQQPAKP) has biased composition (low complexity). The span at 206–218 (KTTKKRPPPKKKT) shows a compositional bias: basic residues. A compositionally biased stretch (low complexity) spans 327–341 (SSASSSAQPSQPAKK). Polar residues-rich tracts occupy residues 349-371 (VPNT…QITP) and 379-425 (PTTT…PPSQ). Residues 585 to 594 (NSHSQSQHSY) are compositionally biased toward low complexity. Positions 858-871 (EEPESESESEPEAE) are enriched in acidic residues. Composition is skewed to basic and acidic residues over residues 872–886 (PEPK…EPAR) and 907–917 (YRNESESTFDW). 3 stretches are compositionally biased toward low complexity: residues 1333–1354 (PNIP…SVSV), 1395–1419 (VPSS…VSAK), and 1584–1601 (LLGT…SSGL).

In terms of tissue distribution, expressed in gonad distal tip cells and gonad sheath cells.

The protein localises to the nucleus. Its subcellular location is the cytoplasm. In terms of biological role, during gonad development, involved in distal tip cell (DTC) migration from the dorsal side of the hermaphrodite body to the midbody which allows for the formation of gonad arms. Role in gonad DTC migration may be in association with integrin related proteins ina-1 and mig-15. This Caenorhabditis elegans protein is Abnormal cell migration protein 38.